The primary structure comprises 313 residues: Protein-methionine-sulfoxide reductase catalytic subunit MsrP (313 aa).

The segment at residues Met1–Ala45 is a signal peptide (tat-type signal). Residues Asn71, Tyr74 to Glu75, Cys128, Thr163, Asn213, Arg218, and Gly229 to Lys231 each bind Mo-molybdopterin.

This sequence belongs to the MsrP family. In terms of assembly, heterodimer of a catalytic subunit (MsrP) and a heme-binding subunit (MsrQ). Mo-molybdopterin is required as a cofactor. Predicted to be exported by the Tat system. The position of the signal peptide cleavage has not been experimentally proven.

Its subcellular location is the periplasm. It carries out the reaction L-methionyl-[protein] + a quinone + H2O = L-methionyl-(S)-S-oxide-[protein] + a quinol. The enzyme catalyses L-methionyl-[protein] + a quinone + H2O = L-methionyl-(R)-S-oxide-[protein] + a quinol. Functionally, part of the MsrPQ system that repairs oxidized periplasmic proteins containing methionine sulfoxide residues (Met-O), using respiratory chain electrons. Thus protects these proteins from oxidative-stress damage caused by reactive species of oxygen and chlorine generated by the host defense mechanisms. MsrPQ is essential for the maintenance of envelope integrity under bleach stress, rescuing a wide series of structurally unrelated periplasmic proteins from methionine oxidation. The catalytic subunit MsrP is non-stereospecific, being able to reduce both (R-) and (S-) diastereoisomers of methionine sulfoxide. This Agrobacterium fabrum (strain C58 / ATCC 33970) (Agrobacterium tumefaciens (strain C58)) protein is Protein-methionine-sulfoxide reductase catalytic subunit MsrP.